A 144-amino-acid chain; its full sequence is Large ribosomal subunit protein uL15 (144 aa).

Positions 1-49 are disordered; the sequence is MIKLECLQDPSPRKRRTKLLGRGPSSGHGKTSSRGHKGDCSRSGYKRRF.

It belongs to the universal ribosomal protein uL15 family. As to quaternary structure, part of the 50S ribosomal subunit.

Its function is as follows. Binds to the 23S rRNA. The protein is Large ribosomal subunit protein uL15 of Chlamydia trachomatis serovar A (strain ATCC VR-571B / DSM 19440 / HAR-13).